Reading from the N-terminus, the 403-residue chain is S-adenosylmethionine synthase (403 aa).

His17 is a binding site for ATP. Residue Asp19 participates in Mg(2+) binding. Residue Glu45 coordinates K(+). L-methionine-binding residues include Glu58 and Gln104. Positions 104–114 (QSPDIAQGVDT) are flexible loop. ATP contacts are provided by residues 179–181 (DGK), 250–251 (KF), Asp259, 265–266 (RK), Ala282, and Lys286. Asp259 serves as a coordination point for L-methionine. Residue Lys290 coordinates L-methionine.

Belongs to the AdoMet synthase family. Homotetramer; dimer of dimers. Requires Mg(2+) as cofactor. K(+) is required as a cofactor.

The protein resides in the cytoplasm. It catalyses the reaction L-methionine + ATP + H2O = S-adenosyl-L-methionine + phosphate + diphosphate. Its pathway is amino-acid biosynthesis; S-adenosyl-L-methionine biosynthesis; S-adenosyl-L-methionine from L-methionine: step 1/1. In terms of biological role, catalyzes the formation of S-adenosylmethionine (AdoMet) from methionine and ATP. The overall synthetic reaction is composed of two sequential steps, AdoMet formation and the subsequent tripolyphosphate hydrolysis which occurs prior to release of AdoMet from the enzyme. The sequence is that of S-adenosylmethionine synthase from Mycobacterium ulcerans (strain Agy99).